The following is a 149-amino-acid chain: UPF0178 protein VV1_1847 (149 aa).

It belongs to the UPF0178 family.

In Vibrio vulnificus (strain CMCP6), this protein is UPF0178 protein VV1_1847.